A 406-amino-acid chain; its full sequence is MPSLYGLERSGDVEKLVELLQESEKETVRRRAAEILGNLDEPEPEGIQALVDAMSDDDESVRAAAIDALTQQEAVDALMRGLDQEVPDSGATWAQAEAFVENLESETPELRMAAANVLGLLGVEDTARPLAKQLQTEEHVGVRARVARALGRIEQPAVTGILVDCLHGEPLKVRREAAESLGRLTTEQALDGLLSVVEDDSEAMRRTAVSSLGRFETAEPVDALVERLGDESDLVRRAAVFSLIEILSNVPPDQSHELRETIVDRMSARSDPSIIKSLIEIIDEGTQLHQRRNATWMLGRVAGDQRTKMDAIEALRELLGEDDDLIAQFAATGLAEIGGASVETSLLEVVETQEYGEDAVAMAAFALGKVGGDRSRQRLERLVDETDSEEVRRRAFSAISKLGGKT.

HEAT repeat units lie at residues 7 to 41, 42 to 78, 90 to 127, 153 to 184, 185 to 215, 216 to 252, and 370 to 406; these read LERS…NLDE, PEPE…VDAL, GATW…EDTA, IEQP…LGRL, TTEQ…LGRF, ETAE…NVPP, and VGGD…GGKT.

Interacts with chemotaxis (Che) proteins.

In terms of biological role, involved in taxis signal transduction. Essential for the ability to control the direction of flagellar rotation. May have a role between CheY and the flagellum. The polypeptide is HEAT repeat-containing taxis protein OE_2401F (Halobacterium salinarum (strain ATCC 29341 / DSM 671 / R1)).